A 217-amino-acid chain; its full sequence is Ras-related protein RABA5b (217 aa).

19–26 (GDSAVGKS) lines the GTP pocket. The short motif at 41 to 49 (SKATIGVEF) is the Effector region element. Residues 67–71 (DTAGQ), 125–128 (NKCD), and 155–156 (SA) contribute to the GTP site. Residues Cys-214 and Cys-215 are each lipidated (S-geranylgeranyl cysteine).

Belongs to the small GTPase superfamily. Rab family.

It is found in the cell membrane. In terms of biological role, intracellular vesicle trafficking and protein transport. In Arabidopsis thaliana (Mouse-ear cress), this protein is Ras-related protein RABA5b (RABA5B).